The primary structure comprises 520 residues: Keratin, type II cytoskeletal 78 (520 aa).

Residues 1–110 form a head region; it reads MSLSPCRAQR…DPQFQVVRTQ (110 aa). A coil 1A region spans residues 111–146; the sequence is ETQEIRTLNNQFASFIDKVRFLEQQNKVLETKWHLL. Residues 111-424 form the IF rod domain; it reads ETQEIRTLNN…RLLEGEECRM (314 aa). The segment at 147-165 is linker 1; sequence QQQGLSGSQQGLEPVFEAC. Residues 166 to 258 form a coil 1B region; that stretch reads LDQLRKQLEQ…LNEEELGQLQ (93 aa). A linker 12 region spans residues 259 to 281; that stretch reads TQASDTSVVLSMDNNRYLDFSSI. The segment at 282–421 is coil 2; it reads ITEVRARYEE…TYRRLLEGEE (140 aa). The segment at 422–520 is tail; sequence CRMSGECTSQ…ESSLKTSITY (99 aa).

The protein belongs to the intermediate filament family. In terms of assembly, heterotetramer of two type I and two type II keratins. As to expression, in non-keratinising esophageal and vaginal epithelium, strongly expressed in the basal and parabasal/lower suprabasal cell layers with considerably decreased expression in the mid/upper suprabasal layers (at protein level). A similar gradient from basal to lower suprabasal layers is seen in the partially keratinised dorsal tongue epithelium, in the scalp and in the plantar epidermis (at protein level). Extension of expression into the suprabasal compartments is distinctly more pronounced in non-keratinising epithelia than in keratinising epithelia and epidermis (at protein level). In scalp sections, present in the interfollicular epidermis and infundibulum including the entire outer root sheath of the hair follicles and also in the sebocytes (at protein level). In sweat glands, expressed in peripheral and luminal cells of the lower duct and in peripheral cells of the middle/upper duct with no expression observed in luminal cells (at protein level). In embryos at the 14th week of pregnancy, detected in basal and parabasal layers but is absent from the uppermost epidermal layer (at protein level). Expressed in tongue epithelium.

This chain is Keratin, type II cytoskeletal 78 (KRT78), found in Homo sapiens (Human).